Reading from the N-terminus, the 387-residue chain is Eukaryotic translation initiation factor 3 subunit M (387 aa).

In terms of domain architecture, PCI spans 181–340 (LSSKVMIELL…RKVHISSTMH (160 aa)).

The protein belongs to the eIF-3 subunit M family. As to quaternary structure, component of the eukaryotic translation initiation factor 3 (eIF-3) complex. The eIF-3 complex interacts with pix.

The protein resides in the cytoplasm. It is found in the golgi apparatus. Its function is as follows. Component of the eukaryotic translation initiation factor 3 (eIF-3) complex, which is involved in protein synthesis of a specialized repertoire of mRNAs and, together with other initiation factors, stimulates binding of mRNA and methionyl-tRNAi to the 40S ribosome. The eIF-3 complex specifically targets and initiates translation of a subset of mRNAs involved in cell proliferation. The polypeptide is Eukaryotic translation initiation factor 3 subunit M (Drosophila grimshawi (Hawaiian fruit fly)).